We begin with the raw amino-acid sequence, 470 residues long: MSGPRTLFEKIWSTHVVCVPDDQPPILYIDRHYVHEVTSPQAFDGLRAAGRKVRRTDLTFATVDHNVPTTSPRLVIKDDVAARQIDALRTNCAAFGVPLFDLTSEEQGIVHVIGPELGLTLPGMTIVCGDSHTSTHGAFGAFAFGIGTSEVEHVLATQCLPQRKPKTMKIEVSGTLPEGVTAKDLALGIIGKLGTDGATGHVIEYCGTAIRALSMEARMTLCNMSIEGGARAGLIGPDEITFAYIRNRQYAPKGAEWDTGVAEWAALNTDEGAKFDREIHINAADLQPQVTWGTNPGMVVSVGANVPDPKATSDDAQRQSYERALTYMDLKPGTPVAQIAVDRVFIGSCTNSRIEDLRAAAKVVSGYHVAATVHAMVVPGSQRIKAKAEEEGLDRVFRDAGFEWRESGCSMCLGMNPDILSPGQRCASTSNRNFEGRQGRGGRTHLVSPAMAAAAAITGHFTDIREWEYK.

3 residues coordinate [4Fe-4S] cluster: Cys349, Cys409, and Cys412.

This sequence belongs to the aconitase/IPM isomerase family. LeuC type 1 subfamily. Heterodimer of LeuC and LeuD. It depends on [4Fe-4S] cluster as a cofactor.

It catalyses the reaction (2R,3S)-3-isopropylmalate = (2S)-2-isopropylmalate. It participates in amino-acid biosynthesis; L-leucine biosynthesis; L-leucine from 3-methyl-2-oxobutanoate: step 2/4. Its function is as follows. Catalyzes the isomerization between 2-isopropylmalate and 3-isopropylmalate, via the formation of 2-isopropylmaleate. This chain is 3-isopropylmalate dehydratase large subunit, found in Koribacter versatilis (strain Ellin345).